We begin with the raw amino-acid sequence, 176 residues long: Large ribosomal subunit protein eL6A (176 aa).

Serine 2 is subject to N-acetylserine. The residue at position 12 (serine 12) is a Phosphoserine. Lysine 128 is covalently cross-linked (Glycyl lysine isopeptide (Lys-Gly) (interchain with G-Cter in ubiquitin)).

It belongs to the eukaryotic ribosomal protein eL6 family. As to quaternary structure, component of the large ribosomal subunit (LSU). Mature yeast ribosomes consist of a small (40S) and a large (60S) subunit. The 40S small subunit contains 1 molecule of ribosomal RNA (18S rRNA) and 33 different proteins (encoded by 57 genes). The large 60S subunit contains 3 rRNA molecules (25S, 5.8S and 5S rRNA) and 46 different proteins (encoded by 81 genes). Post-translationally, N-terminally acetylated by acetyltransferase NatA.

The protein localises to the cytoplasm. Its function is as follows. Component of the ribosome, a large ribonucleoprotein complex responsible for the synthesis of proteins in the cell. The small ribosomal subunit (SSU) binds messenger RNAs (mRNAs) and translates the encoded message by selecting cognate aminoacyl-transfer RNA (tRNA) molecules. The large subunit (LSU) contains the ribosomal catalytic site termed the peptidyl transferase center (PTC), which catalyzes the formation of peptide bonds, thereby polymerizing the amino acids delivered by tRNAs into a polypeptide chain. The nascent polypeptides leave the ribosome through a tunnel in the LSU and interact with protein factors that function in enzymatic processing, targeting, and the membrane insertion of nascent chains at the exit of the ribosomal tunnel. The sequence is that of Large ribosomal subunit protein eL6A from Saccharomyces cerevisiae (strain ATCC 204508 / S288c) (Baker's yeast).